A 412-amino-acid chain; its full sequence is Propionate kinase (412 aa).

It belongs to the acetokinase family. PduW subfamily.

The protein localises to the cytoplasm. The enzyme catalyses propanoate + ATP = propanoyl phosphate + ADP. Its pathway is polyol metabolism; 1,2-propanediol degradation. Its function is as follows. Works with phosphate acetyltransferase (pta) to capture exogenous propionate and regenerate propionyl-CoA during degradation of 1,2-propanediol (1,2-PD). The sequence is that of Propionate kinase from Yersinia enterocolitica serotype O:8 / biotype 1B (strain NCTC 13174 / 8081).